We begin with the raw amino-acid sequence, 145 residues long: Aegerolysin Aa-Pri1 (145 aa).

The propeptide occupies 1 to 8 (MDSNKDER).

Belongs to the aegerolysin family.

The polypeptide is Aegerolysin Aa-Pri1 (AA-PRI1) (Cyclocybe aegerita (Black poplar mushroom)).